A 235-amino-acid chain; its full sequence is Maximins-S type A (235 aa).

The signal sequence occupies residues 1-18 (MNFNYFILVLFFITSGHA). 2 propeptides span residues 19–35 (KSET…HIKR) and 52–65 (SAEE…LVKR). Position 83 is an asparagine amide (N83). A propeptide spanning residues 87-100 (SAEEQDLAEDLVTR) is cleaved from the precursor. N118 is modified (asparagine amide). A propeptide spanning residues 122-135 (SAEEQDLAEDLVKR) is cleaved from the precursor. An Asparagine amide modification is found at N153. The propeptide occupies 157-170 (SAEEQDLAEDLVTR). Residue K188 is modified to Lysine amide. A propeptide spanning residues 192-205 (SAEDQDLAEDLVTR) is cleaved from the precursor. A Lysine amide modification is found at K223. Residues 227-235 (SAEQEKDMK) constitute a propeptide that is removed on maturation.

It belongs to the maximin-S family. As to expression, expressed by the skin dorsal glands.

It localises to the secreted. Functionally, maximin-S1 has no antimicrobial activity. Has no hemolytic activity. Maximin-S2 has an activity against mycoplasma but has no activity against common Gram-positive and Gram-negative bacteria nor fungi. Has no hemolytic activity. In terms of biological role, maximin-S3 has an activity against mycoplasma but has no activity against common Gram-positive and Gram-negative bacteria nor fungi. Has no hemolytic activity. Its function is as follows. Maximin-S4 has an activity against mycoplasma but has no activity against common Gram-positive and Gram-negative bacteria nor fungi. Has no hemolytic activity. Functionally, maximin-S5 has an activity against mycoplasma but has no activity against common Gram-positive and Gram-negative bacteria nor fungi. Has no hemolytic activity. The chain is Maximins-S type A from Bombina maxima (Giant fire-bellied toad).